Here is a 640-residue protein sequence, read N- to C-terminus: Envelope glycoprotein (640 aa).

The N-terminal stretch at Met-1–Ser-32 is a signal peptide. Over Val-33–Leu-582 the chain is Extracellular. Asn-43 and Asn-58 each carry an N-linked (GlcNAc...) asparagine; by host glycan. 2 cysteine pairs are disulfide-bonded: Cys-109–Cys-126 and Cys-118–Cys-131. Asn-297 carries N-linked (GlcNAc...) asparagine; by host glycosylation. Intrachain disulfides connect Cys-307/Cys-310, Cys-307/Cys-535, Cys-337/Cys-391, Cys-356/Cys-368, Cys-398/Cys-411, and Cys-527/Cys-534. Positions Cys-307–Cys-310 match the CXXC motif. Residues Asn-329 and Asn-336 are each glycosylated (N-linked (GlcNAc...) asparagine; by host). N-linked (GlcNAc...) asparagine; by host glycosylation occurs at Asn-369. A fusion peptide region spans residues Val-444–Val-464. The stretch at Ala-473–Val-509 forms a coiled coil. The immunosuppression stretch occupies residues Leu-510–Leu-526. Positions Cys-527 to Cys-535 match the CX6CC motif. The chain crosses the membrane as a helical span at residues Ile-583–Ile-603. Over Leu-604–Glu-640 the chain is Cytoplasmic. The YXXL motif; contains endocytosis signal motif lies at Tyr-627–Leu-630.

As to quaternary structure, the mature envelope protein (Env) consists of a trimer of SU-TM heterodimers attached by a labile interchain disulfide bond. Post-translationally, specific enzymatic cleavages in vivo yield mature proteins. Envelope glycoproteins are synthesized as an inactive precursor that is N-glycosylated and processed likely by host cell furin or by a furin-like protease in the Golgi to yield the mature SU and TM proteins. The cleavage site between SU and TM requires the minimal sequence [KR]-X-[KR]-R. The R-peptide is released from the C-terminus of the cytoplasmic tail of the TM protein upon particle formation as a result of proteolytic cleavage by the viral protease. Cleavage of this peptide is required for TM to become fusogenic. In terms of processing, the CXXC motif is highly conserved across a broad range of retroviral envelope proteins. It is thought to participate in the formation of a labile disulfide bond possibly with the CX6CC motif present in the transmembrane protein. Isomerization of the intersubunit disulfide bond to an SU intrachain disulfide bond is thought to occur upon receptor recognition in order to allow membrane fusion. The R-peptide is palmitoylated.

Its subcellular location is the virion membrane. The protein resides in the host cell membrane. In terms of biological role, the surface protein (SU) attaches the virus to the host cell by binding to its receptor. This interaction triggers the refolding of the transmembrane protein (TM) and is thought to activate its fusogenic potential by unmasking its fusion peptide. Fusion occurs at the host cell plasma membrane. Functionally, the transmembrane protein (TM) acts as a class I viral fusion protein. Under the current model, the protein has at least 3 conformational states: pre-fusion native state, pre-hairpin intermediate state, and post-fusion hairpin state. During viral and target cell membrane fusion, the coiled coil regions (heptad repeats) assume a trimer-of-hairpins structure, positioning the fusion peptide in close proximity to the C-terminal region of the ectodomain. The formation of this structure appears to drive apposition and subsequent fusion of viral and target cell membranes. Membranes fusion leads to delivery of the nucleocapsid into the cytoplasm. The sequence is that of Envelope glycoprotein (env) from Mus musculus (Mouse).